The following is a 267-amino-acid chain: Outer membrane protein assembly factor BamD (267 aa).

Positions 1 to 16 (MKKILLTVSLGLALSA) are cleaved as a signal peptide. The N-palmitoyl cysteine moiety is linked to residue cysteine 17. Cysteine 17 carries the S-diacylglycerol cysteine lipid modification.

It belongs to the BamD family. In terms of assembly, part of the Bam complex.

The protein localises to the cell outer membrane. Its function is as follows. Part of the outer membrane protein assembly complex, which is involved in assembly and insertion of beta-barrel proteins into the outer membrane. Required for efficient transformation of Neisseria meningitidis by species-related DNA. This Neisseria meningitidis serogroup A / serotype 4A (strain DSM 15465 / Z2491) protein is Outer membrane protein assembly factor BamD.